Consider the following 868-residue polypeptide: Leucine--tRNA ligase (868 aa).

Residues 42–52 (PYPSGKLHMGH) carry the 'HIGH' region motif. The short motif at 627–631 (KMSKS) is the 'KMSKS' region element. K630 serves as a coordination point for ATP.

The protein belongs to the class-I aminoacyl-tRNA synthetase family.

The protein localises to the cytoplasm. It catalyses the reaction tRNA(Leu) + L-leucine + ATP = L-leucyl-tRNA(Leu) + AMP + diphosphate. In Pseudomonas putida (strain GB-1), this protein is Leucine--tRNA ligase.